We begin with the raw amino-acid sequence, 259 residues long: Ribosomal RNA small subunit methyltransferase J (259 aa).

Residues Arg101–Asp102, Glu117–Arg118, Ser153–Ser154, and Asp176 contribute to the S-adenosyl-L-methionine site.

It belongs to the methyltransferase superfamily. RsmJ family.

The protein localises to the cytoplasm. It catalyses the reaction guanosine(1516) in 16S rRNA + S-adenosyl-L-methionine = N(2)-methylguanosine(1516) in 16S rRNA + S-adenosyl-L-homocysteine + H(+). Functionally, specifically methylates the guanosine in position 1516 of 16S rRNA. This Aliivibrio fischeri (strain MJ11) (Vibrio fischeri) protein is Ribosomal RNA small subunit methyltransferase J.